A 483-amino-acid chain; its full sequence is Fructose-like PTS system EIIBC component (483 aa).

One can recognise a PTS EIIB type-2 domain in the interval 1–105 (MESSLRIVAI…IDQIFSELPT (105 aa)). Cysteine 13 functions as the Phosphocysteine intermediate; for EIIB activity in the catalytic mechanism. Phosphocysteine; by EIIA is present on cysteine 13. Residues 128–475 (VMSHLMAGVS…LWLRRKAKAA (348 aa)) enclose the PTS EIIC type-2 domain. Transmembrane regions (helical) follow at residues 132-152 (LMAG…LVAL), 180-200 (IGYL…ASSI), 204-224 (PAFA…LLGT), 227-247 (GAGF…VFWF), 264-284 (LIPF…IGPV), 303-323 (MKFA…GGPI), 344-364 (AIVG…TFIA), 380-400 (IVVG…AAPL), 402-422 (MITA…AFGI), and 442-462 (VGSF…FIIV).

Its subcellular location is the cell inner membrane. The catalysed reaction is D-fructose(out) + N(pros)-phospho-L-histidyl-[protein] = D-fructose 1-phosphate(in) + L-histidyl-[protein]. Functionally, the phosphoenolpyruvate-dependent sugar phosphotransferase system (sugar PTS), a major carbohydrate active transport system, catalyzes the phosphorylation of incoming sugar substrates concomitantly with their translocation across the cell membrane. The enzyme II FrvAB PTS system is involved in fructose transport. The chain is Fructose-like PTS system EIIBC component from Escherichia coli (strain K12).